Consider the following 257-residue polypeptide: Methylthioribulose-1-phosphate dehydratase (257 aa).

The segment at 1-33 (MVSSQEKMASISDIIQKDEDSGSEKTESQDKEH) is disordered. Residues 15 to 33 (IQKDEDSGSEKTESQDKEH) are compositionally biased toward basic and acidic residues. Cysteine 107 contributes to the substrate binding site. Histidine 125 and histidine 127 together coordinate Zn(2+). Catalysis depends on glutamate 149, which acts as the Proton donor/acceptor. Histidine 205 contacts Zn(2+).

This sequence belongs to the aldolase class II family. MtnB subfamily. Requires Zn(2+) as cofactor.

The protein localises to the cytoplasm. The enzyme catalyses 5-(methylsulfanyl)-D-ribulose 1-phosphate = 5-methylsulfanyl-2,3-dioxopentyl phosphate + H2O. Its pathway is amino-acid biosynthesis; L-methionine biosynthesis via salvage pathway; L-methionine from S-methyl-5-thio-alpha-D-ribose 1-phosphate: step 2/6. Functionally, catalyzes the dehydration of methylthioribulose-1-phosphate (MTRu-1-P) into 2,3-diketo-5-methylthiopentyl-1-phosphate (DK-MTP-1-P). Functions in the methionine salvage pathway. May play a role in apoptosis. This chain is Methylthioribulose-1-phosphate dehydratase, found in Esox lucius (Northern pike).